We begin with the raw amino-acid sequence, 131 residues long: Small ribosomal subunit protein uS11 (131 aa).

It belongs to the universal ribosomal protein uS11 family. In terms of assembly, part of the 30S ribosomal subunit. Interacts with proteins S7 and S18. Binds to IF-3.

Functionally, located on the platform of the 30S subunit, it bridges several disparate RNA helices of the 16S rRNA. Forms part of the Shine-Dalgarno cleft in the 70S ribosome. The protein is Small ribosomal subunit protein uS11 of Natranaerobius thermophilus (strain ATCC BAA-1301 / DSM 18059 / JW/NM-WN-LF).